The sequence spans 191 residues: Cytochrome b-245 light chain (191 aa).

Residues 2-7 lie on the Cytoplasmic side of the membrane; it reads GQIEWA. The helical transmembrane segment at 8–30 threads the bilayer; sequence MWANEQALASGLILITGGIVATA. Over 31–35 the chain is Extracellular; the sequence is GQFTQ. The helical transmembrane segment at 36–53 threads the bilayer; that stretch reads WYLGAYSIAAGVLVCLLE. At 54-69 the chain is on the cytoplasmic side; sequence YPRGKRSKGSTMERCG. The stretch at 70 to 80 is an intramembrane region; it reads QKYLTRVVKLF. Residues 81-86 are Cytoplasmic-facing; that stretch reads GPLTRN. The helical transmembrane segment at 87 to 104 threads the bilayer; sequence YYIRAFLHLGLAVPAGFL. Residue leucine 105 is a topological domain, extracellular. Residues 106–126 traverse the membrane as a helical segment; sequence ATILGTACLAIASGIYLLAAI. Over 127–191 the chain is Cytoplasmic; sequence RGEQWSPIEP…NPMPVNDEVV (65 aa). The tract at residues 134-191 is disordered; that stretch reads IEPKPKERPQIGGTIKQPPSNPPPRPPAEARKKPSEEAAGVPTGGPQENPMPVNDEVV. Threonine 147 bears the Phosphothreonine mark. Lysine 149 is covalently cross-linked (Glycyl lysine isopeptide (Lys-Gly) (interchain with G-Cter in ubiquitin)). Serine 168 carries the post-translational modification Phosphoserine.

This sequence belongs to the p22phox family. As to quaternary structure, component of the phagocyte NADPH oxidase core complex/cytochrome b558 complex, composed of CYBB (heavy chain (beta)) and CYBA (light chain (alpha)). Component of the phagocyte NADPH oxidase complex composed of an obligatory core heterodimer formed by the membrane proteins CYBA and CYBB and the cytosolic regulatory subunits NCF1/p47-phox, NCF2/p67-phox, NCF4/p40-phox and the small GTPase RAC1 or RAC2. Interacts with NCF1 (via SH3 domain). Interacts with SH3PXD2A. Interacts with DUOX1, DUOX2 and TPO. Interacts with NOX4; this interaction mediates superoxide generation. Interacts with calprotectin (S100A8/9). Interacts with GBP7. Interacts with NOXO1. Forms a heterodimer with NOX3 and is essential for activity and cell membrane localization of NOX3. Interacts with NOX1. Post-translationally, phosphorylation at Thr-147 enhances NADPH oxidase activity by promoting NCF1/p47-phox binding. In terms of processing, ubiquitinated at Lys-149 likely by RNF145.

It localises to the cell membrane. Subunit of NADPH oxidase complexes that is required for the NADPH oxidase activity that generates, in various cell types, superoxide from molecular oxygen utilizing NADPH as an electron donor. Subunit of the phagocyte NADPH oxidase complex that mediates the transfer of electrons from cytosolic NADPH to O2 to produce the superoxide anion (O2(-)). In the activated complex, electrons are first transferred from NADPH to flavin adenine dinucleotide (FAD) and subsequently transferred via two heme molecules to molecular oxygen, producing superoxide through an outer-sphere reaction. Activation of the NADPH oxidase complex is initiated by the assembly of cytosolic subunits of the NADPH oxidase complex with the core NADPH oxidase complex to form a complex at the plasma membrane or phagosomal membrane. This activation process is initiated by phosphorylation dependent binding of the cytosolic NCF1/p47-phox subunit to the C-terminus of CYBA/p22-phox. Aassociates with NOX3 to form a functional NADPH oxidase constitutively generating superoxide. This is Cytochrome b-245 light chain from Bos taurus (Bovine).